The chain runs to 222 residues: Extracellular protein ARB_03106 (222 aa).

Residues 1–18 (MRLHSVLAVATAVGCAVA) form the signal peptide. Asn-113 and Asn-126 each carry an N-linked (GlcNAc...) asparagine glycan.

It is found in the secreted. This is Extracellular protein ARB_03106 from Arthroderma benhamiae (strain ATCC MYA-4681 / CBS 112371) (Trichophyton mentagrophytes).